Reading from the N-terminus, the 159-residue chain is Phosphopantetheine adenylyltransferase (159 aa).

Ser-10 is a binding site for substrate. ATP contacts are provided by residues 10-11 and His-18; that span reads SF. Substrate contacts are provided by Lys-42, Leu-77, and Lys-91. ATP contacts are provided by residues 92–94, Glu-102, and 126–132; these read GIR and NAHVSSS.

This sequence belongs to the bacterial CoaD family. In terms of assembly, homohexamer. Requires Mg(2+) as cofactor.

The protein resides in the cytoplasm. It catalyses the reaction (R)-4'-phosphopantetheine + ATP + H(+) = 3'-dephospho-CoA + diphosphate. Its pathway is cofactor biosynthesis; coenzyme A biosynthesis; CoA from (R)-pantothenate: step 4/5. Reversibly transfers an adenylyl group from ATP to 4'-phosphopantetheine, yielding dephospho-CoA (dPCoA) and pyrophosphate. This Leifsonia xyli subsp. xyli (strain CTCB07) protein is Phosphopantetheine adenylyltransferase.